The chain runs to 177 residues: DELTA-stichotoxin-Hcr4b (177 aa).

Residues 3-12 are plays an important role in the hemolytic activity; sequence ALAGTITLGA. Residues 11-30 form an N-terminal region region; it reads GASLGFQILDKVLGELGKVS. S54, V87, S105, P107, Y133, Y137, and Y138 together coordinate phosphocholine. The segment at 105 to 120 is trp-rich region, which is important for the binding to lipid membrane; the sequence is SVPFDYNLYSNWWDVK.

This sequence belongs to the actinoporin family. Sea anemone subfamily. Octamer or nonamer in membranes. Monomer in the soluble state.

It is found in the secreted. Its subcellular location is the nematocyst. The protein resides in the target cell membrane. Pore-forming protein that forms cations-selective hydrophilic pores of around 1 nm and causes cardiac stimulation and cytolysis. Pore formation is a multi-step process that involves specific recognition of membrane sphingomyelin (but neither cholesterol nor phosphatidylcholine) using aromatic rich region and adjacent phosphocholine (POC) binding site, firm binding to the membrane (mainly driven by hydrophobic interactions) accompanied by the transfer of the N-terminal region to the lipid-water interface and finally pore formation after oligomerization of monomers. Cytolytic effects include red blood cells hemolysis, platelet aggregation and lysis, cytotoxic and cytostatic effects on fibroblasts. Lethality in mammals has been ascribed to severe vasospasm of coronary vessels, cardiac arrhythmia, and inotropic effects. Preincubation with exogenous sphingomyeline causes complete loss of hemolytic activity. This is DELTA-stichotoxin-Hcr4b from Radianthus crispa (Leathery sea anemone).